We begin with the raw amino-acid sequence, 437 residues long: Chromosomal replication initiator protein DnaA (437 aa).

The segment at 1–69 (MLGDTTLKQL…AHLFELSTGI (69 aa)) is domain I, interacts with DnaA modulators. Residues 69–100 (IRPKIEIRLGSLKKDVKSSSPKAGVSKGQKST) form a domain II region. The interval 101 to 315 (ILNPSFTFDS…GIIIKLNAYA (215 aa)) is domain III, AAA+ region. 4 residues coordinate ATP: glycine 145, glycine 147, lysine 148, and threonine 149. Residues 316–437 (NLMNQEITLQ…ELKNKIKSRN (122 aa)) are domain IV, binds dsDNA.

Belongs to the DnaA family. Oligomerizes as a right-handed, spiral filament on DNA at oriC.

Its subcellular location is the cytoplasm. In terms of biological role, plays an essential role in the initiation and regulation of chromosomal replication. ATP-DnaA binds to the origin of replication (oriC) to initiate formation of the DNA replication initiation complex once per cell cycle. Binds the DnaA box (a 9 base pair repeat at the origin) and separates the double-stranded (ds)DNA. Forms a right-handed helical filament on oriC DNA; dsDNA binds to the exterior of the filament while single-stranded (ss)DNA is stabiized in the filament's interior. The ATP-DnaA-oriC complex binds and stabilizes one strand of the AT-rich DNA unwinding element (DUE), permitting loading of DNA polymerase. After initiation quickly degrades to an ADP-DnaA complex that is not apt for DNA replication. Binds acidic phospholipids. The protein is Chromosomal replication initiator protein DnaA of Wolinella succinogenes (strain ATCC 29543 / DSM 1740 / CCUG 13145 / JCM 31913 / LMG 7466 / NCTC 11488 / FDC 602W) (Vibrio succinogenes).